The chain runs to 351 residues: Probable protein phosphatase 2C 41 (351 aa).

Residues 62-348 (FTSICSNRGE…DDISVLCLFF (287 aa)) enclose the PPM-type phosphatase domain. Aspartate 98, glycine 99, aspartate 293, and aspartate 339 together coordinate Mn(2+).

It belongs to the PP2C family. It depends on Mg(2+) as a cofactor. The cofactor is Mn(2+).

It catalyses the reaction O-phospho-L-seryl-[protein] + H2O = L-seryl-[protein] + phosphate. It carries out the reaction O-phospho-L-threonyl-[protein] + H2O = L-threonyl-[protein] + phosphate. The protein is Probable protein phosphatase 2C 41 of Arabidopsis thaliana (Mouse-ear cress).